We begin with the raw amino-acid sequence, 317 residues long: Signal recognition particle receptor FtsY (317 aa).

GTP contacts are provided by residues 117 to 124 (GVNGVGKT), 199 to 203 (DTAGR), and 263 to 266 (TKLD).

Belongs to the GTP-binding SRP family. FtsY subfamily. As to quaternary structure, part of the signal recognition particle protein translocation system, which is composed of SRP and FtsY.

It is found in the cell membrane. It localises to the cytoplasm. It catalyses the reaction GTP + H2O = GDP + phosphate + H(+). Involved in targeting and insertion of nascent membrane proteins into the cytoplasmic membrane. Acts as a receptor for the complex formed by the signal recognition particle (SRP) and the ribosome-nascent chain (RNC). This chain is Signal recognition particle receptor FtsY, found in Deinococcus radiodurans (strain ATCC 13939 / DSM 20539 / JCM 16871 / CCUG 27074 / LMG 4051 / NBRC 15346 / NCIMB 9279 / VKM B-1422 / R1).